A 64-amino-acid chain; its full sequence is Small ribosomal subunit protein bS21 (64 aa).

It belongs to the bacterial ribosomal protein bS21 family.

The polypeptide is Small ribosomal subunit protein bS21 (Neorickettsia sennetsu (strain ATCC VR-367 / Miyayama) (Ehrlichia sennetsu)).